Reading from the N-terminus, the 514-residue chain is Bifunctional lysine-specific demethylase and histidyl-hydroxylase NO66 (514 aa).

A disordered region spans residues 1-53; the sequence is MKRGLEEEIEEMSEEEVGVNNNNNGKKKKKKVVKKSKPVPLTKSVPQVSSQPL. Over residues 7–17 the composition is skewed to acidic residues; the sequence is EEIEEMSEEEV. The span at 25 to 37 shows a compositional bias: basic residues; sequence GKKKKKKVVKKSK. Positions 44–53 are enriched in polar residues; the sequence is SVPQVSSQPL. Residues 180–327 enclose the JmjC domain; the sequence is CSVRLLNPQT…IGKVLNRALE (148 aa). Fe cation contacts are provided by H226, D228, and H291.

This sequence belongs to the ROX family. NO66 subfamily. It depends on Fe(2+) as a cofactor.

It is found in the nucleus. The catalysed reaction is N(6),N(6)-dimethyl-L-lysyl(36)-[histone H3] + 2 2-oxoglutarate + 2 O2 = L-lysyl(36)-[histone H3] + 2 formaldehyde + 2 succinate + 2 CO2. In terms of biological role, oxygenase that can act as both a histone lysine demethylase and a ribosomal histidine hydroxylase. Specifically demethylates 'Lys-4' (H3K4me) and 'Lys-36' (H3K36me) of histone H3, thereby playing a central role in histone code. This Dictyostelium discoideum (Social amoeba) protein is Bifunctional lysine-specific demethylase and histidyl-hydroxylase NO66 (jcdg).